The primary structure comprises 277 residues: Small ribosomal subunit protein uS2 (277 aa).

Positions 1-78 are disordered; sequence MSENDEGTDA…PADEEPVLDE (78 aa).

It belongs to the universal ribosomal protein uS2 family.

The protein is Small ribosomal subunit protein uS2 of Natronomonas pharaonis (strain ATCC 35678 / DSM 2160 / CIP 103997 / JCM 8858 / NBRC 14720 / NCIMB 2260 / Gabara) (Halobacterium pharaonis).